The sequence spans 145 residues: D-aminoacyl-tRNA deacylase (145 aa).

The short motif at 137 to 138 is the Gly-cisPro motif, important for rejection of L-amino acids element; it reads GP.

This sequence belongs to the DTD family. As to quaternary structure, homodimer.

Its subcellular location is the cytoplasm. It carries out the reaction glycyl-tRNA(Ala) + H2O = tRNA(Ala) + glycine + H(+). The catalysed reaction is a D-aminoacyl-tRNA + H2O = a tRNA + a D-alpha-amino acid + H(+). Functionally, an aminoacyl-tRNA editing enzyme that deacylates mischarged D-aminoacyl-tRNAs. Also deacylates mischarged glycyl-tRNA(Ala), protecting cells against glycine mischarging by AlaRS. Acts via tRNA-based rather than protein-based catalysis; rejects L-amino acids rather than detecting D-amino acids in the active site. By recycling D-aminoacyl-tRNA to D-amino acids and free tRNA molecules, this enzyme counteracts the toxicity associated with the formation of D-aminoacyl-tRNA entities in vivo and helps enforce protein L-homochirality. The chain is D-aminoacyl-tRNA deacylase from Limosilactobacillus fermentum (strain NBRC 3956 / LMG 18251) (Lactobacillus fermentum).